We begin with the raw amino-acid sequence, 381 residues long: MKIIFATEPIKYPLTGIGRYSLELVKRLAVAREIEELKLFHGASFIDQIPQVENKSDSKASNHGRLLAFLRRQPLLIEAYRLLHPRRQAWALRDYKDYIYHGPNFYLPHRLERAVTTFHDISIFTCPEYHPKDRVRYMEKSLHESLDSAKLILTVSDFSRSEIIRLFNYPADRIVTTKLACSSDYIPRSPAECLPVLQKYQLAWQGYALYIGTMEPRKNIRGLLQAYQLLPMETRMRYPLILSGYRGWEDDVLWQLVERGTREGWIRYLGYVPDEDLPYLYAAARTFVYPSFYEGFGLPILEAMSCGVPVVCSNVTSLPEVVGDAGLVADPNDVDAISAHILQSLQDDSWREIATARGLAQAKQFSWENCTTQTINAYKLL.

Belongs to the glycosyltransferase group 1 family. Glycosyltransferase 4 subfamily.

The enzyme catalyses alpha-D-mannosyl-(1-&gt;3)-N-acetyl-alpha-D-glucosaminyl-di-trans,octa-cis-undecaprenyl diphosphate + 2 GDP-alpha-D-mannose = alpha-D-mannosyl-(1-&gt;3)-alpha-D-mannosyl-(1-&gt;3)-alpha-D-mannosyl-(1-&gt;3)-N-acetyl-alpha-D-glucosaminyl-di-trans,octa-cis-undecaprenyl diphosphate + 2 GDP + 2 H(+). It functions in the pathway bacterial outer membrane biogenesis; LPS O-antigen biosynthesis. Mannosyltransferase involved in the biosynthesis of the repeat unit of the lipopolysaccharide (LPS) O-antigen region. Catalyzes the transfer of two alpha-(1-&gt;3)-linked mannose residues to the product of the WbdC enzyme during the synthesis of the adapter region. In Escherichia coli, this protein is O-antigen chain mannosyltransferase B.